The sequence spans 468 residues: IQ domain-containing protein C (468 aa).

The region spanning 6–35 (LVLKVTALQACIRGFLVRRQFQSLRGEYEA) is the IQ domain. Disordered regions lie at residues 113 to 157 (NASS…GPGL), 202 to 245 (EVNQ…PGEP), and 329 to 468 (SHKE…GPAG). Residues 139-150 (QETRDVSRKNDP) show a composition bias toward basic and acidic residues. Over residues 415 to 426 (SSIERSPSESSH) the composition is skewed to basic and acidic residues.

This chain is IQ domain-containing protein C (IQCC), found in Bos taurus (Bovine).